The sequence spans 207 residues: Serotonin N-acetyltransferase (207 aa).

Phosphothreonine; by PKA is present on Thr-31. In terms of domain architecture, N-acetyltransferase spans Asn-35–Arg-196. Leu-124 contributes to the substrate binding site. Acetyl-CoA is bound by residues Leu-124–Val-126 and Gln-132–Ser-137. Substrate is bound at residue Met-159. Tyr-168–Arg-170 is an acetyl-CoA binding site. Residue Ser-205 is modified to Phosphoserine.

It belongs to the acetyltransferase family. AANAT subfamily. As to quaternary structure, monomer. Interacts with several 14-3-3 proteins, including YWHAB, YWHAE, YWHAG and YWHAZ, preferentially when phosphorylated at Thr-31. Phosphorylation on Ser-205 also allows binding to YWHAZ, but with lower affinity. The interaction with YWHAZ considerably increases affinity for arylalkylamines and acetyl-CoA and protects the enzyme from dephosphorylation and proteasomal degradation. It may also prevent thiol-dependent inactivation. CAMP-dependent phosphorylation on both N-terminal Thr-31 and C-terminal Ser-205 regulates AANAT activity by promoting interaction with 14-3-3 proteins. In terms of tissue distribution, high levels in pineal gland and retina.

The protein resides in the cytoplasm. The catalysed reaction is a 2-arylethylamine + acetyl-CoA = an N-acetyl-2-arylethylamine + CoA + H(+). It functions in the pathway aromatic compound metabolism; melatonin biosynthesis; melatonin from serotonin: step 1/2. Functionally, controls the night/day rhythm of melatonin production in the pineal gland. Catalyzes the N-acetylation of serotonin into N-acetylserotonin, the penultimate step in the synthesis of melatonin. This chain is Serotonin N-acetyltransferase (AANAT), found in Bos taurus (Bovine).